The sequence spans 64 residues: MEWKTCNFCGKSIEPGTGKKFVKKDGSVMFICSSKCEKNYKLKRVARKLRWTPIYYNNKHSNKK.

Zn(2+) contacts are provided by Cys-6, Cys-9, Cys-32, and Cys-36. The C4-type zinc finger occupies 6-36; sequence CNFCGKSIEPGTGKKFVKKDGSVMFICSSKC.

It belongs to the eukaryotic ribosomal protein eL24 family. Part of the 50S ribosomal subunit. Forms a cluster with proteins L3 and L14. Zn(2+) serves as cofactor.

Functionally, binds to the 23S rRNA. The polypeptide is Large ribosomal subunit protein eL24 (Methanococcus aeolicus (strain ATCC BAA-1280 / DSM 17508 / OCM 812 / Nankai-3)).